We begin with the raw amino-acid sequence, 218 residues long: GTP cyclohydrolase 1 (218 aa).

Residues Cys-109, His-112, and Cys-180 each coordinate Zn(2+).

It belongs to the GTP cyclohydrolase I family. Toroid-shaped homodecamer, composed of two pentamers of five dimers.

The catalysed reaction is GTP + H2O = 7,8-dihydroneopterin 3'-triphosphate + formate + H(+). The protein operates within cofactor biosynthesis; 7,8-dihydroneopterin triphosphate biosynthesis; 7,8-dihydroneopterin triphosphate from GTP: step 1/1. This chain is GTP cyclohydrolase 1, found in Histophilus somni (strain 129Pt) (Haemophilus somnus).